The sequence spans 128 residues: MKKKHKRLLVASGIFFFLNCIVFFILTILRENISFFYTVSEAITLSNNQKPIRIGGMVVEDSVIRSESEVVFQMTDFNKSIVIKYQGILPPMFSEKSGVVVQGKMFDGNTFLAETVFAKHDENYMPRK.

The Cytoplasmic portion of the chain corresponds to 1–7 (MKKKHKR). The helical; Signal-anchor for type II membrane protein transmembrane segment at 8 to 28 (LLVASGIFFFLNCIVFFILTI) threads the bilayer. Over 29–128 (LRENISFFYT…KHDENYMPRK (100 aa)) the chain is Extracellular. Positions 120 and 124 each coordinate heme.

It belongs to the CcmE/CycJ family.

The protein localises to the cell membrane. Heme chaperone required for the biogenesis of c-type cytochromes. Transiently binds heme delivered by CcmC and transfers the heme to apo-cytochromes in a process facilitated by CcmF and CcmH. The protein is Cytochrome c-type biogenesis protein CcmE of Wolbachia sp. subsp. Brugia malayi (strain TRS).